Consider the following 510-residue polypeptide: Proline--tRNA ligase 2 (510 aa).

The protein belongs to the class-II aminoacyl-tRNA synthetase family. ProS type 3 subfamily. In terms of assembly, homodimer.

Its subcellular location is the cytoplasm. It carries out the reaction tRNA(Pro) + L-proline + ATP = L-prolyl-tRNA(Pro) + AMP + diphosphate. Its function is as follows. Catalyzes the attachment of proline to tRNA(Pro) in a two-step reaction: proline is first activated by ATP to form Pro-AMP and then transferred to the acceptor end of tRNA(Pro). This chain is Proline--tRNA ligase 2, found in Anaeromyxobacter dehalogenans (strain 2CP-C).